Consider the following 157-residue polypeptide: 2-C-methyl-D-erythritol 2,4-cyclodiphosphate synthase (157 aa).

Residues Asp-8 and His-10 each contribute to the a divalent metal cation site. 4-CDP-2-C-methyl-D-erythritol 2-phosphate is bound by residues 8–10 (DVH) and 34–35 (HS). His-42 is a binding site for a divalent metal cation. Residues 56–58 (DIG), 61–65 (FPDTD), 100–106 (AQRPKMA), 132–135 (TTTE), Phe-139, and Arg-142 each bind 4-CDP-2-C-methyl-D-erythritol 2-phosphate.

Belongs to the IspF family. Homotrimer. Requires a divalent metal cation as cofactor.

The enzyme catalyses 4-CDP-2-C-methyl-D-erythritol 2-phosphate = 2-C-methyl-D-erythritol 2,4-cyclic diphosphate + CMP. It participates in isoprenoid biosynthesis; isopentenyl diphosphate biosynthesis via DXP pathway; isopentenyl diphosphate from 1-deoxy-D-xylulose 5-phosphate: step 4/6. Involved in the biosynthesis of isopentenyl diphosphate (IPP) and dimethylallyl diphosphate (DMAPP), two major building blocks of isoprenoid compounds. Catalyzes the conversion of 4-diphosphocytidyl-2-C-methyl-D-erythritol 2-phosphate (CDP-ME2P) to 2-C-methyl-D-erythritol 2,4-cyclodiphosphate (ME-CPP) with a corresponding release of cytidine 5-monophosphate (CMP). The sequence is that of 2-C-methyl-D-erythritol 2,4-cyclodiphosphate synthase from Geobacter sulfurreducens (strain ATCC 51573 / DSM 12127 / PCA).